The sequence spans 85 residues: ATP synthase subunit c (85 aa).

Transmembrane regions (helical) follow at residues Leu-20 to Phe-40 and Phe-65 to Ala-85.

The protein belongs to the ATPase C chain family. As to quaternary structure, F-type ATPases have 2 components, F(1) - the catalytic core - and F(0) - the membrane proton channel. F(1) has five subunits: alpha(3), beta(3), gamma(1), delta(1), epsilon(1). F(0) has three main subunits: a(1), b(2) and c(10-14). The alpha and beta chains form an alternating ring which encloses part of the gamma chain. F(1) is attached to F(0) by a central stalk formed by the gamma and epsilon chains, while a peripheral stalk is formed by the delta and b chains.

It is found in the cell inner membrane. Its function is as follows. F(1)F(0) ATP synthase produces ATP from ADP in the presence of a proton or sodium gradient. F-type ATPases consist of two structural domains, F(1) containing the extramembraneous catalytic core and F(0) containing the membrane proton channel, linked together by a central stalk and a peripheral stalk. During catalysis, ATP synthesis in the catalytic domain of F(1) is coupled via a rotary mechanism of the central stalk subunits to proton translocation. Functionally, key component of the F(0) channel; it plays a direct role in translocation across the membrane. A homomeric c-ring of between 10-14 subunits forms the central stalk rotor element with the F(1) delta and epsilon subunits. The sequence is that of ATP synthase subunit c from Gluconobacter oxydans (strain 621H) (Gluconobacter suboxydans).